The chain runs to 473 residues: Glutamate--tRNA ligase 1 (473 aa).

Residues 10 to 20 (PSPTGFLHIGG) carry the 'HIGH' region motif. The 'KMSKS' region motif lies at 252-256 (KLSKR). Residue K255 participates in ATP binding.

The protein belongs to the class-I aminoacyl-tRNA synthetase family. Glutamate--tRNA ligase type 1 subfamily. In terms of assembly, monomer.

It localises to the cytoplasm. It carries out the reaction tRNA(Glu) + L-glutamate + ATP = L-glutamyl-tRNA(Glu) + AMP + diphosphate. In terms of biological role, catalyzes the attachment of glutamate to tRNA(Glu) in a two-step reaction: glutamate is first activated by ATP to form Glu-AMP and then transferred to the acceptor end of tRNA(Glu). The sequence is that of Glutamate--tRNA ligase 1 from Wolbachia pipientis wMel.